A 436-amino-acid chain; its full sequence is Probable mediator of RNA polymerase II transcription subunit 26b (436 aa).

Residues 71–111 (PGDDEANRGTTGNGGGGTAVDEDYEVAGGSKESKANSSRGD) are disordered. A TFIIS N-terminal domain is found at 139–214 (KEVARIKEIL…AEWKELVDQW (76 aa)). Residues 263 to 376 (HFFDSLDFDG…PQQEKLKGLD (114 aa)) form a disordered region. Basic and acidic residues-rich tracts occupy residues 276–290 (NSEEHNTSREHERRP) and 332–350 (TEQRMKNETVSVHKSEKPM). The stretch at 382–402 (EFAKRKLQESYQHHENAKKQR) forms a coiled coil. Residues 408 to 436 (EMIPKQGSAQKPQLKRPGMSNRNWANGRK) form a disordered region. Residues 427–436 (SNRNWANGRK) show a composition bias toward polar residues.

The protein belongs to the Mediator complex subunit 26 family. As to quaternary structure, component of the Mediator complex.

The protein localises to the nucleus. Functionally, component of the Mediator complex, a coactivator involved in the regulated transcription of nearly all RNA polymerase II-dependent genes. Mediator functions as a bridge to convey information from gene-specific regulatory proteins to the basal RNA polymerase II transcription machinery. The Mediator complex, having a compact conformation in its free form, is recruited to promoters by direct interactions with regulatory proteins and serves for the assembly of a functional preinitiation complex with RNA polymerase II and the general transcription factors. May play a role in transcription elongation. This Arabidopsis thaliana (Mouse-ear cress) protein is Probable mediator of RNA polymerase II transcription subunit 26b (MED26B).